The following is a 33-amino-acid chain: Photosystem II reaction center protein Psb30 (33 aa).

A helical membrane pass occupies residues 8-28 (QLTALAFIVLSGPLVIALLAF).

The protein belongs to the Psb30/Ycf12 family. In terms of assembly, PSII is composed of 1 copy each of membrane proteins PsbA, PsbB, PsbC, PsbD, PsbE, PsbF, PsbH, PsbI, PsbJ, PsbK, PsbL, PsbM, PsbT, PsbX, PsbY, PsbZ, Psb30/Ycf12, peripheral proteins of the oxygen-evolving complex and a large number of cofactors. It forms dimeric complexes.

The protein localises to the plastid. It localises to the chloroplast thylakoid membrane. In terms of biological role, a core subunit of photosystem II (PSII), probably helps stabilize the reaction center. In Staurastrum punctulatum (Green alga), this protein is Photosystem II reaction center protein Psb30.